Consider the following 209-residue polypeptide: Uracil phosphoribosyltransferase (209 aa).

5-phospho-alpha-D-ribose 1-diphosphate is bound by residues Arg-79, Arg-104, and 131 to 139; that span reads DPMLATGNS. Uracil is bound by residues Ile-194 and 199–201; that span reads GDA. A 5-phospho-alpha-D-ribose 1-diphosphate-binding site is contributed by Asp-200.

This sequence belongs to the UPRTase family. Mg(2+) is required as a cofactor.

The enzyme catalyses UMP + diphosphate = 5-phospho-alpha-D-ribose 1-diphosphate + uracil. Its pathway is pyrimidine metabolism; UMP biosynthesis via salvage pathway; UMP from uracil: step 1/1. With respect to regulation, allosterically activated by GTP. Catalyzes the conversion of uracil and 5-phospho-alpha-D-ribose 1-diphosphate (PRPP) to UMP and diphosphate. This chain is Uracil phosphoribosyltransferase, found in Polaromonas naphthalenivorans (strain CJ2).